Reading from the N-terminus, the 242-residue chain is DNA repair protein RecO (242 aa).

This sequence belongs to the RecO family.

Its function is as follows. Involved in DNA repair and RecF pathway recombination. This is DNA repair protein RecO from Nitrosospira multiformis (strain ATCC 25196 / NCIMB 11849 / C 71).